Consider the following 626-residue polypeptide: Phosphomethylpyrimidine synthase (626 aa).

The tract at residues 1–22 is disordered; that stretch reads MTKQEKAINLSESAQVDQQSVQ. The segment covering 10–22 has biased composition (polar residues); that stretch reads LSESAQVDQQSVQ. Residues asparagine 232, methionine 261, tyrosine 290, histidine 326, 346–348, 387–390, and glutamate 426 contribute to the substrate site; these read SRG and DGLR. Histidine 430 is a Zn(2+) binding site. Tyrosine 453 contacts substrate. Residue histidine 494 coordinates Zn(2+). Cysteine 574, cysteine 577, and cysteine 582 together coordinate [4Fe-4S] cluster.

Belongs to the ThiC family. In terms of assembly, homodimer. [4Fe-4S] cluster is required as a cofactor.

The enzyme catalyses 5-amino-1-(5-phospho-beta-D-ribosyl)imidazole + S-adenosyl-L-methionine = 4-amino-2-methyl-5-(phosphooxymethyl)pyrimidine + CO + 5'-deoxyadenosine + formate + L-methionine + 3 H(+). It participates in cofactor biosynthesis; thiamine diphosphate biosynthesis. In terms of biological role, catalyzes the synthesis of the hydroxymethylpyrimidine phosphate (HMP-P) moiety of thiamine from aminoimidazole ribotide (AIR) in a radical S-adenosyl-L-methionine (SAM)-dependent reaction. This is Phosphomethylpyrimidine synthase from Pseudomonas putida (strain GB-1).